We begin with the raw amino-acid sequence, 110 residues long: U1-lycotoxin-Ls1hh (110 aa).

An N-terminal signal peptide occupies residues 1-20 (MKFVLLFGVLLVTLFSYSSA). A propeptide spanning residues 21-44 (EMLDDFDQADEDELLSLIEKEEAR) is cleaved from the precursor. Cystine bridges form between C47/C62, C54/C71, C61/C89, and C73/C87.

The protein belongs to the neurotoxin 19 (CSTX) family. 03 subfamily. In terms of tissue distribution, expressed by the venom gland.

The protein localises to the secreted. The protein is U1-lycotoxin-Ls1hh of Lycosa singoriensis (Wolf spider).